We begin with the raw amino-acid sequence, 305 residues long: HPr kinase/phosphorylase (305 aa).

Catalysis depends on residues His136 and Lys157. 151-158 (GESGIGKS) is an ATP binding site. Residue Ser158 participates in Mg(2+) binding. Asp175 functions as the Proton acceptor; for phosphorylation activity. Proton donor; for dephosphorylation activity in the catalytic mechanism. Positions 198 to 207 (LEVRGLGIID) are important for the catalytic mechanism of both phosphorylation and dephosphorylation. Glu199 is a Mg(2+) binding site. Residue Arg240 is part of the active site. The tract at residues 261 to 266 (PIRPGR) is important for the catalytic mechanism of dephosphorylation.

This sequence belongs to the HPrK/P family. In terms of assembly, homohexamer. Requires Mg(2+) as cofactor.

It carries out the reaction [HPr protein]-L-serine + ATP = [HPr protein]-O-phospho-L-serine + ADP + H(+). The enzyme catalyses [HPr protein]-O-phospho-L-serine + phosphate + H(+) = [HPr protein]-L-serine + diphosphate. Catalyzes the ATP- as well as the pyrophosphate-dependent phosphorylation of a specific serine residue in HPr, a phosphocarrier protein of the phosphoenolpyruvate-dependent sugar phosphotransferase system (PTS). HprK/P also catalyzes the pyrophosphate-producing, inorganic phosphate-dependent dephosphorylation (phosphorolysis) of seryl-phosphorylated HPr (P-Ser-HPr). The two antagonistic activities of HprK/P are regulated by several intracellular metabolites, which change their concentration in response to the absence or presence of rapidly metabolisable carbon sources (glucose, fructose, etc.) in the growth medium. Therefore, by controlling the phosphorylation state of HPr, HPrK/P is a sensor enzyme that plays a major role in the regulation of carbon metabolism and sugar transport: it mediates carbon catabolite repression (CCR), and regulates PTS-catalyzed carbohydrate uptake and inducer exclusion. The chain is HPr kinase/phosphorylase from Clostridium tetani (strain Massachusetts / E88).